A 96-amino-acid chain; its full sequence is Large ribosomal subunit protein eL30 (96 aa).

It belongs to the eukaryotic ribosomal protein eL30 family.

The sequence is that of Large ribosomal subunit protein eL30 from Methanosphaerula palustris (strain ATCC BAA-1556 / DSM 19958 / E1-9c).